Here is a 130-residue protein sequence, read N- to C-terminus: Small ribosomal subunit protein uS11 (130 aa).

It belongs to the universal ribosomal protein uS11 family. As to quaternary structure, part of the 30S ribosomal subunit. Interacts with proteins S7 and S18. Binds to IF-3.

In terms of biological role, located on the platform of the 30S subunit, it bridges several disparate RNA helices of the 16S rRNA. Forms part of the Shine-Dalgarno cleft in the 70S ribosome. In Acholeplasma laidlawii (strain PG-8A), this protein is Small ribosomal subunit protein uS11.